The sequence spans 331 residues: dTDP-glucose 4,6-dehydratase (331 aa).

Residues 11–12 (FI), 33–36 (DALT), 57–58 (DI), 77–81 (FAAES), and Thr-96 each bind NAD(+). Ser-81 is a substrate binding site. Thr-120 is a binding site for substrate. Asp-121 functions as the Proton donor in the catalytic mechanism. Active-site proton acceptor residues include Glu-122 and Tyr-147. 147–151 (YSATK) provides a ligand contact to NAD(+). Asn-176 serves as a coordination point for substrate. Residue Asn-177 coordinates NAD(+). Substrate contacts are provided by residues 186-191 (KFIPRQ), 202-204 (KLY), Arg-211, Asn-246, and 269-273 (DRVGH).

The protein belongs to the NAD(P)-dependent epimerase/dehydratase family. dTDP-glucose dehydratase subfamily. Homodimer. The cofactor is NAD(+).

The catalysed reaction is dTDP-alpha-D-glucose = dTDP-4-dehydro-6-deoxy-alpha-D-glucose + H2O. Its pathway is carbohydrate biosynthesis; dTDP-L-rhamnose biosynthesis. In terms of biological role, catalyzes the dehydration of dTDP-D-glucose to form dTDP-6-deoxy-D-xylo-4-hexulose via a three-step process involving oxidation, dehydration and reduction. Involved in the biosynthesis of the dTDP-L-rhamnose which is a component of the critical linker, D-N-acetylglucosamine-L-rhamnose disaccharide, which connects the galactan region of arabinogalactan to peptidoglycan via a phosphodiester linkage. In Mycobacterium tuberculosis (strain CDC 1551 / Oshkosh), this protein is dTDP-glucose 4,6-dehydratase (rmlB).